The chain runs to 119 residues: Large ribosomal subunit protein bL19 (119 aa).

Belongs to the bacterial ribosomal protein bL19 family.

Its function is as follows. This protein is located at the 30S-50S ribosomal subunit interface and may play a role in the structure and function of the aminoacyl-tRNA binding site. This Pseudoalteromonas translucida (strain TAC 125) protein is Large ribosomal subunit protein bL19.